A 223-amino-acid chain; its full sequence is Transmembrane protein 126 (223 aa).

Residues 1 to 39 are Mitochondrial matrix-facing; that stretch reads MALSRAKPDELPRDAVVITEDQALKYQWKIITSWDKIGE. Residues 40 to 62 form a helical membrane-spanning segment; that stretch reads VWSLRYTPGILSALAAGTGAYIN. At 63–78 the chain is on the mitochondrial intermembrane side; sequence NHYRTKLRLGGHGRLS. Residues 79–99 form a helical membrane-spanning segment; sequence TYLPIVAVPAIFTMLAHKFFI. Topologically, residues 100 to 123 are mitochondrial matrix; sequence QRPILLNPLGECPVCIQMRSAAFQ. The chain crosses the membrane as a helical span at residues 124-144; sequence TSLGIVYPTILAPFAAFLFAT. The Mitochondrial intermembrane portion of the chain corresponds to 145-171; that stretch reads RCYTYRIPSITENPREVFLLWRKFTRP. A helical membrane pass occupies residues 172-192; it reads IVPALGTLIGLQALLTMFLTG. The Mitochondrial matrix segment spans residues 193-223; the sequence is QEDKQNFKLMLRMREIEHQVEEEHLPQRMDF.

It belongs to the TMEM126 family. Associates with mitochondrial complex I assembly intermediates during its biogenesis.

It localises to the mitochondrion membrane. In terms of biological role, as part of the MCIA complex, involved in the assembly of the mitochondrial complex I. In Drosophila melanogaster (Fruit fly), this protein is Transmembrane protein 126.